The following is a 213-amino-acid chain: Imidazole glycerol phosphate synthase subunit HisH 1 (213 aa).

The 211-residue stretch at 3-213 (SVSILDYGVG…LSIIQQFLQI (211 aa)) folds into the Glutamine amidotransferase type-1 domain. The Nucleophile role is filled by Cys-81. Active-site residues include His-195 and Glu-197.

In terms of assembly, heterodimer of HisH and HisF.

It is found in the cytoplasm. The enzyme catalyses 5-[(5-phospho-1-deoxy-D-ribulos-1-ylimino)methylamino]-1-(5-phospho-beta-D-ribosyl)imidazole-4-carboxamide + L-glutamine = D-erythro-1-(imidazol-4-yl)glycerol 3-phosphate + 5-amino-1-(5-phospho-beta-D-ribosyl)imidazole-4-carboxamide + L-glutamate + H(+). The catalysed reaction is L-glutamine + H2O = L-glutamate + NH4(+). Its pathway is amino-acid biosynthesis; L-histidine biosynthesis; L-histidine from 5-phospho-alpha-D-ribose 1-diphosphate: step 5/9. Its function is as follows. IGPS catalyzes the conversion of PRFAR and glutamine to IGP, AICAR and glutamate. The HisH subunit provides the glutamine amidotransferase activity that produces the ammonia necessary to HisF for the synthesis of IGP and AICAR. This is Imidazole glycerol phosphate synthase subunit HisH 1 from Legionella pneumophila (strain Lens).